Consider the following 232-residue polypeptide: Probable anion ABC transporter permease protein HVO_1887 (232 aa).

Residues 16-217 (TAVSLYVSTA…ALVLGVNALG (202 aa)) form the ABC transmembrane type-1 domain. Transmembrane regions (helical) follow at residues 23–43 (STAA…AVGF), 55–75 (VIST…LLVL), 93–113 (MILS…LSAV), 146–166 (IVTA…SVLI), and 198–218 (TGIA…ALGA).

The protein belongs to the binding-protein-dependent transport system permease family. As to quaternary structure, the complex is composed of two ATP-binding proteins (HVO_1886), two transmembrane proteins (HVO_1887) and a solute-binding protein (HVO_1888).

Its subcellular location is the cell membrane. Its function is as follows. Part of an ABC transporter complex involved in anions import. Responsible for the translocation of the substrate across the membrane. The polypeptide is Probable anion ABC transporter permease protein HVO_1887 (Haloferax volcanii (strain ATCC 29605 / DSM 3757 / JCM 8879 / NBRC 14742 / NCIMB 2012 / VKM B-1768 / DS2) (Halobacterium volcanii)).